We begin with the raw amino-acid sequence, 504 residues long: 6,7,8-trihydroxycoumarin synthase (504 aa).

A helical transmembrane segment spans residues 1 to 21 (MEPVFLFLILAFPIASVYLLF). Residues 363–368 (PAPVLV) are substrate specificity. Residue C444 coordinates heme.

The protein belongs to the cytochrome P450 family. Requires heme as cofactor.

The protein localises to the microsome membrane. The protein operates within secondary metabolite biosynthesis. Its function is as follows. Involved in the biosynthesis of coumarins and furanocoumarins (FCs), natural products required for defense responses against attacks by predators with potential medical and agroindustrial usages such as anticoagulant, rodenticide and artificial vanilla substitutes. Able to catalyze the hydroxylation of esculetin to produce 6,7,8-trihydroxycoumarin. This chain is 6,7,8-trihydroxycoumarin synthase, found in Pastinaca sativa (Wild parsnip).